Consider the following 101-residue polypeptide: Small ribosomal subunit protein uS14A (101 aa).

The disordered stretch occupies residues 35 to 56 (TSSYEQRLDAQRALSRQPRDAS).

The protein belongs to the universal ribosomal protein uS14 family. As to quaternary structure, part of the 30S ribosomal subunit. Contacts proteins S3 and S10.

Functionally, binds 16S rRNA, required for the assembly of 30S particles and may also be responsible for determining the conformation of the 16S rRNA at the A site. The chain is Small ribosomal subunit protein uS14A from Mycobacterium marinum (strain ATCC BAA-535 / M).